Consider the following 337-residue polypeptide: Phenylalanine--tRNA ligase alpha subunit (337 aa).

Mg(2+) is bound at residue Glu-252.

This sequence belongs to the class-II aminoacyl-tRNA synthetase family. Phe-tRNA synthetase alpha subunit type 1 subfamily. As to quaternary structure, tetramer of two alpha and two beta subunits. It depends on Mg(2+) as a cofactor.

Its subcellular location is the cytoplasm. The catalysed reaction is tRNA(Phe) + L-phenylalanine + ATP = L-phenylalanyl-tRNA(Phe) + AMP + diphosphate + H(+). This Cellvibrio japonicus (strain Ueda107) (Pseudomonas fluorescens subsp. cellulosa) protein is Phenylalanine--tRNA ligase alpha subunit.